Reading from the N-terminus, the 140-residue chain is Natriuretic peptides A (140 aa).

The first 24 residues, 1 to 24 (MDTRGSFSCGFLLLLLIQLQPSRA), serve as a signal peptide directing secretion. The propeptide occupies 25-111 (NPIYNLSPAK…KRLRGVQMPR (87 aa)). A disordered region spans residues 55 to 94 (ALESNPDLQEPQTQEEIPPELTDDSDEQKAEPKLASNTPL). The segment covering 71-80 (IPPELTDDSD) has biased composition (acidic residues). An intrachain disulfide couples cysteine 118 to cysteine 134.

It belongs to the natriuretic peptide family. Cleaved by CORIN upon secretion to produce the functional hormone.

Its subcellular location is the secreted. In terms of biological role, hormone playing a key role in cardiovascular homeostasis through regulation of natriuresis, diuresis, and vasodilation. Specifically binds and stimulates the cGMP production of the NPR1 receptor. Binds the clearance receptor NPR3. This Gallus gallus (Chicken) protein is Natriuretic peptides A (NPPA).